Here is a 300-residue protein sequence, read N- to C-terminus: uncharacterized protein (300 aa).

Residues E146, E148, and D177 each contribute to the a divalent metal cation site.

Belongs to the FAH family.

This is an uncharacterized protein from Staphylococcus aureus (strain MW2).